The primary structure comprises 402 residues: GTPase Obg (402 aa).

The Obg domain maps to 1 to 159 (MRFIDEAIVT…KELKFELKVV (159 aa)). In terms of domain architecture, OBG-type G spans 160-334 (ADVGLIGLPN…VKYHLMNEIE (175 aa)). GTP-binding positions include 166–173 (GLPNAGKS), 191–195 (FTTLV), 213–216 (DIPG), 283–286 (NKID), and 315–317 (STL). 2 residues coordinate Mg(2+): S173 and T193. The tract at residues 382-402 (AAFNNELDDDDDDGVEVVYAP) is disordered. Residues 387–396 (ELDDDDDDGV) are compositionally biased toward acidic residues.

It belongs to the TRAFAC class OBG-HflX-like GTPase superfamily. OBG GTPase family. In terms of assembly, monomer. Mg(2+) is required as a cofactor.

The protein resides in the cytoplasm. In terms of biological role, an essential GTPase which binds GTP, GDP and possibly (p)ppGpp with moderate affinity, with high nucleotide exchange rates and a fairly low GTP hydrolysis rate. Plays a role in control of the cell cycle, stress response, ribosome biogenesis and in those bacteria that undergo differentiation, in morphogenesis control. The protein is GTPase Obg of Psychrobacter sp. (strain PRwf-1).